Reading from the N-terminus, the 250-residue chain is MRTPLVMGNWKLNGTKESVSALIKGIEAAADAAKNVEVAVCPPTIFIEQVANLVANNSIELGAQDVSTNISGAFTGETSPVMVKEFGAKYSLVGHSERRQYHNETDAVVAAKFVAIQANGLVPVLCIGETLEERETDKTFNVVETQLKAVIDVSGIDALENAVIAYEPVWAIGTGKVASSEQAQDVHAHIRTWLAEQSKVVAAKVQILYGGSVKASSAKELFAQPDIDGGLVGGAALLVEEFVGIIEGAK.

9–11 (NWK) contributes to the substrate binding site. Histidine 95 (electrophile) is an active-site residue. Catalysis depends on glutamate 167, which acts as the Proton acceptor. Substrate-binding positions include glycine 173, serine 212, and 233-234 (GG).

It belongs to the triosephosphate isomerase family. Homodimer.

The protein localises to the cytoplasm. The catalysed reaction is D-glyceraldehyde 3-phosphate = dihydroxyacetone phosphate. It functions in the pathway carbohydrate biosynthesis; gluconeogenesis. Its pathway is carbohydrate degradation; glycolysis; D-glyceraldehyde 3-phosphate from glycerone phosphate: step 1/1. Involved in the gluconeogenesis. Catalyzes stereospecifically the conversion of dihydroxyacetone phosphate (DHAP) to D-glyceraldehyde-3-phosphate (G3P). The chain is Triosephosphate isomerase from Psychromonas ingrahamii (strain DSM 17664 / CCUG 51855 / 37).